Here is a 345-residue protein sequence, read N- to C-terminus: Protein-glutamate methylesterase/protein-glutamine glutaminase (345 aa).

The Response regulatory domain maps to 5 to 123 (KVIVVDDSVL…ELSKMKDDLI (119 aa)). The residue at position 56 (aspartate 56) is a 4-aspartylphosphate. One can recognise a CheB-type methylesterase domain in the interval 153–343 (SSDSIEAVVI…DEIIKIVRGL (191 aa)). Catalysis depends on residues serine 165, histidine 192, and aspartate 285.

Belongs to the CheB family. Post-translationally, phosphorylated by CheA. Phosphorylation of the N-terminal regulatory domain activates the methylesterase activity.

The protein localises to the cytoplasm. It catalyses the reaction [protein]-L-glutamate 5-O-methyl ester + H2O = L-glutamyl-[protein] + methanol + H(+). The catalysed reaction is L-glutaminyl-[protein] + H2O = L-glutamyl-[protein] + NH4(+). Involved in chemotaxis. Part of a chemotaxis signal transduction system that modulates chemotaxis in response to various stimuli. Catalyzes the demethylation of specific methylglutamate residues introduced into the chemoreceptors (methyl-accepting chemotaxis proteins or MCP) by CheR. Also mediates the irreversible deamidation of specific glutamine residues to glutamic acid. This Clostridium acetobutylicum (strain ATCC 824 / DSM 792 / JCM 1419 / IAM 19013 / LMG 5710 / NBRC 13948 / NRRL B-527 / VKM B-1787 / 2291 / W) protein is Protein-glutamate methylesterase/protein-glutamine glutaminase.